Reading from the N-terminus, the 174-residue chain is ATP synthase subunit delta (174 aa).

This sequence belongs to the ATPase delta chain family. F-type ATPases have 2 components, F(1) - the catalytic core - and F(0) - the membrane proton channel. F(1) has five subunits: alpha(3), beta(3), gamma(1), delta(1), epsilon(1). F(0) has three main subunits: a(1), b(2) and c(10-14). The alpha and beta chains form an alternating ring which encloses part of the gamma chain. F(1) is attached to F(0) by a central stalk formed by the gamma and epsilon chains, while a peripheral stalk is formed by the delta and b chains.

It is found in the cell inner membrane. In terms of biological role, f(1)F(0) ATP synthase produces ATP from ADP in the presence of a proton or sodium gradient. F-type ATPases consist of two structural domains, F(1) containing the extramembraneous catalytic core and F(0) containing the membrane proton channel, linked together by a central stalk and a peripheral stalk. During catalysis, ATP synthesis in the catalytic domain of F(1) is coupled via a rotary mechanism of the central stalk subunits to proton translocation. Its function is as follows. This protein is part of the stalk that links CF(0) to CF(1). It either transmits conformational changes from CF(0) to CF(1) or is implicated in proton conduction. This is ATP synthase subunit delta from Helicobacter hepaticus (strain ATCC 51449 / 3B1).